The primary structure comprises 309 residues: Oxidoreductase NAD-binding domain-containing protein 1 (309 aa).

An N-terminal signal peptide occupies residues 1-14; sequence MVVVIPRLLRGSLG. The FAD-binding FR-type domain occupies 47-161; that stretch reads HLERTADVVR…VGGEFFFDPK (115 aa). 175-180 is a binding site for NAD(+); it reads GVGINP.

The protein is Oxidoreductase NAD-binding domain-containing protein 1 (OXNAD1) of Bos taurus (Bovine).